The chain runs to 389 residues: Probable L-tyrosine/L-aspartate decarboxylase (389 aa).

N6-(pyridoxal phosphate)lysine is present on lysine 233.

The protein belongs to the group II decarboxylase family. MfnA subfamily. Pyridoxal 5'-phosphate serves as cofactor.

The catalysed reaction is L-tyrosine + H(+) = tyramine + CO2. It catalyses the reaction L-aspartate + H(+) = beta-alanine + CO2. It functions in the pathway cofactor biosynthesis; methanofuran biosynthesis. It participates in cofactor biosynthesis; coenzyme A biosynthesis. Functionally, catalyzes the decarboxylation of L-tyrosine to produce tyramine for methanofuran biosynthesis. Can also catalyze the decarboxylation of L-aspartate to produce beta-alanine for coenzyme A (CoA) biosynthesis. In Methanosphaera stadtmanae (strain ATCC 43021 / DSM 3091 / JCM 11832 / MCB-3), this protein is Probable L-tyrosine/L-aspartate decarboxylase.